A 206-amino-acid chain; its full sequence is Small ribosomal subunit protein uS4 (206 aa).

The region spanning 96–158 (SRLDNVVYRM…AKKQSRIKAA (63 aa)) is the S4 RNA-binding domain.

Belongs to the universal ribosomal protein uS4 family. In terms of assembly, part of the 30S ribosomal subunit. Contacts protein S5. The interaction surface between S4 and S5 is involved in control of translational fidelity.

In terms of biological role, one of the primary rRNA binding proteins, it binds directly to 16S rRNA where it nucleates assembly of the body of the 30S subunit. Its function is as follows. With S5 and S12 plays an important role in translational accuracy. This chain is Small ribosomal subunit protein uS4, found in Wigglesworthia glossinidia brevipalpis.